The sequence spans 226 residues: Ribose-5-phosphate isomerase A (226 aa).

Residues 26-29 (TGST), 82-85 (DGAD), and 95-98 (KGGG) contribute to the substrate site. The Proton acceptor role is filled by E104. K122 lines the substrate pocket.

The protein belongs to the ribose 5-phosphate isomerase family. In terms of assembly, homodimer.

It catalyses the reaction aldehydo-D-ribose 5-phosphate = D-ribulose 5-phosphate. It functions in the pathway carbohydrate degradation; pentose phosphate pathway; D-ribose 5-phosphate from D-ribulose 5-phosphate (non-oxidative stage): step 1/1. Catalyzes the reversible conversion of ribose-5-phosphate to ribulose 5-phosphate. The chain is Ribose-5-phosphate isomerase A from Streptococcus uberis (strain ATCC BAA-854 / 0140J).